Here is a 55-residue protein sequence, read N- to C-terminus: Large ribosomal subunit protein bL33 (55 aa).

The protein belongs to the bacterial ribosomal protein bL33 family.

This Hamiltonella defensa subsp. Acyrthosiphon pisum (strain 5AT) protein is Large ribosomal subunit protein bL33.